Here is a 365-residue protein sequence, read N- to C-terminus: Sulfate/thiosulfate import ATP-binding protein CysA (365 aa).

One can recognise an ABC transporter domain in the interval 3–237 (IEIANIKKSF…PATRFVLEFM (235 aa)). Position 35-42 (35-42 (GPSGSGKT)) interacts with ATP.

Belongs to the ABC transporter superfamily. Sulfate/tungstate importer (TC 3.A.1.6) family. The complex is composed of two ATP-binding proteins (CysA), two transmembrane proteins (CysT and CysW) and a solute-binding protein (CysP).

The protein localises to the cell inner membrane. The catalysed reaction is sulfate(out) + ATP + H2O = sulfate(in) + ADP + phosphate + H(+). The enzyme catalyses thiosulfate(out) + ATP + H2O = thiosulfate(in) + ADP + phosphate + H(+). Part of the ABC transporter complex CysAWTP involved in sulfate/thiosulfate import. Responsible for energy coupling to the transport system. The protein is Sulfate/thiosulfate import ATP-binding protein CysA of Shigella flexneri.